The sequence spans 564 residues: uncharacterized protein (564 aa).

Residues 1 to 17 (MRRPSTASLTRTPSRAS) are compositionally biased toward polar residues. The interval 1 to 564 (MRRPSTASLT…ASTPSSEVIS (564 aa)) is disordered. Composition is skewed to low complexity over residues 79–97 (SPRT…RASP) and 114–134 (SPTG…ASPT). The span at 153–168 (RSPSTASLTRTPSRAS) shows a compositional bias: polar residues. The span at 170 to 179 (TRWPPRASPT) shows a compositional bias: low complexity. Residues 250 to 271 (GSPPRASPMTPPRASPRTPPRA) show a composition bias toward pro residues. Over residues 272-299 (SPTTTPSRASLTRTPSWASPTTTPSRAS) the composition is skewed to low complexity. The span at 318 to 351 (PTGTPSRASPTGTPSRASLTGSPSRASLTGTPSR) shows a compositional bias: polar residues. A compositionally biased stretch (low complexity) spans 378–416 (RASLTGTSSTASLTRTPSRASLTRTQSSSSLTRTPSMAS). Positions 467–564 (SRASLTRTPS…ASTPSSEVIS (98 aa)) are enriched in polar residues.

This is an uncharacterized protein from Homo sapiens (Human).